Here is a 1861-residue protein sequence, read N- to C-terminus: Golgi-specific brefeldin A-resistance guanine nucleotide exchange factor 1 (1861 aa).

The interval 1–211 (MVDKNIYIIQ…EPKSYVGTNM (211 aa)) is DCB; DCB:DCB domain and DCB:HUS domain interaction. The interval 1–380 (MVDKNIYIIQ…SVHDMDYVNP (380 aa)) is interaction with RAB1B. 2 disordered regions span residues 210-264 (NMKK…LTGG) and 289-353 (CTDS…VESI). Basic residues predominate over residues 227–241 (WKKQKRSPRPPRHTT). Residues 253–262 (NGATLPSNLT) show a composition bias toward polar residues. Ser-349 and Ser-352 each carry phosphoserine. Residue Thr-507 is modified to Phosphothreonine. Residues 530-550 (RIPSFVTELYINYDCDYYCSN) are HUS; DCB:HUS domain interaction. The interval 603 to 634 (QEKKETARPGFEAVDGNPETNKSERATSDGKS) is disordered. In terms of domain architecture, SEC7 spans 692–882 (ELIEIKNKKK…EDMYHAIKNE (191 aa)). Residues 886–1372 (MPEEQTGLVR…LSRPGPSPLV (487 aa)) form a phosphatidylinositol-phosphate binding; required for translocation to the leading edge and for ARF1 activation upon GPCR signaling region. Positions 1286–1296 (TARADAPDAGA) are enriched in low complexity. The segment at 1286–1335 (TARADAPDAGAQSDSELPSYHQNDVSLDRGYTSDSEVYTDHGRPGKIHRS) is disordered. Residues 1297-1310 (QSDSELPSYHQNDV) show a composition bias toward polar residues. The residue at position 1298 (Ser-1298) is a Phosphoserine. Tyr-1316 bears the Phosphotyrosine mark. Ser-1318, Ser-1320, and Ser-1335 each carry phosphoserine. Position 1337 is a phosphothreonine (Thr-1337). Disordered regions lie at residues 1431–1486 (GCKS…EGVP) and 1727–1812 (PMPA…PLIL). Over residues 1434-1448 (SQDKRSKSHKYDSKG) the composition is skewed to basic and acidic residues. A phosphoserine mark is found at Ser-1477, Ser-1775, and Ser-1786. A compositionally biased stretch (low complexity) spans 1776-1793 (TRAPSSSSPGSPMASSPS).

Can form homodimers and probably homotetramers. Interacts with COPG1; the interaction is independent on ARF1 activation. Interacts with ARF1, ARF3, ARF4 and ARF5. Interacts with RAB1B (GTP-bound form); required for GBF1 membrane association. Interacts with GGA1, GGA2 and GGA3. Interacts with USO1. Interacts (via SEC7 domain) with PNPLA2 (via C-terminus); the interaction is direct. Interacts with ARMH3.

The protein localises to the golgi apparatus. It is found in the cis-Golgi network. Its subcellular location is the endoplasmic reticulum-Golgi intermediate compartment. It localises to the trans-Golgi network. The protein resides in the cytoplasm. The protein localises to the lipid droplet. It is found in the membrane. In terms of biological role, guanine-nucleotide exchange factor (GEF) for members of the Arf family of small GTPases involved in trafficking in the early secretory pathway; its GEF activity initiates the coating of nascent vesicles via the localized generation of activated ARFs through replacement of GDP with GTP. Recruitment to cis-Golgi membranes requires membrane association of Arf-GDP and can be regulated by ARF1, ARF3, ARF4 and ARF5. Involved in the recruitment of the COPI coat complex to the endoplasmic reticulum exit sites (ERES), and the endoplasmic reticulum-Golgi intermediate (ERGIC) and cis-Golgi compartments which implicates ARF1 activation. Involved in COPI vesicle-dependent retrograde transport from the ERGIC and cis-Golgi compartments to the endoplasmic reticulum (ER). Involved in the trans-Golgi network recruitment of GGA1, GGA2, GGA3, BIG1, BIG2, and the AP-1 adaptor protein complex related to chlathrin-dependent transport; the function requires its GEF activity (probably at least in part on ARF4 and ARF5). Has GEF activity towards ARF1. Has in vitro GEF activity towards ARF5. Involved in the processing of PSAP. Required for the assembly of the Golgi apparatus. The AMPK-phosphorylated form is involved in Golgi disassembly during mitotis and under stress conditions. May be involved in the COPI vesicle-dependent recruitment of PNPLA2 to lipid droplets; however, this function is under debate. In neutrophils, involved in G protein-coupled receptor (GPCR)-mediated chemotaxis und superoxide production. Proposed to be recruited by phosphatidylinositol-phosphates generated upon GPCR stimulation to the leading edge where it recruits and activates ARF1, and is involved in recruitment of GIT2 and the NADPH oxidase complex. Plays a role in maintaining mitochondrial morphology. In Mus musculus (Mouse), this protein is Golgi-specific brefeldin A-resistance guanine nucleotide exchange factor 1.